Reading from the N-terminus, the 579-residue chain is Folliculin (579 aa).

A disordered region spans residues Gln-31–Cys-82. Phosphoserine is present on residues Ser-62 and Ser-73. The span at Pro-63–Pro-76 shows a compositional bias: low complexity. The region spanning Arg-86–Thr-242 is the uDENN FLCN/SMCR8-type domain. Residues Glu-287–Ala-310 adopt a coiled-coil conformation. The span at Glu-294–Glu-308 shows a compositional bias: acidic residues. The interval Glu-294–Thr-323 is disordered. A phosphoserine mark is found at Ser-302, Ser-406, Ser-537, Ser-542, and Ser-571. Residues Gln-339–Thr-491 enclose the cDENN FLCN/SMCR8-type domain. In terms of domain architecture, dDENN FLCN/SMCR8-type spans Gln-493–Ser-558.

It belongs to the folliculin family. In terms of assembly, interacts (via C-terminus) with FNIP1 or FNIP2 (via C-terminus). Component of the lysosomal folliculin complex (LFC), composed of FLCN, FNIP1 (or FNIP2), RagA/RRAGA or RagB/RRAGB GDP-bound, RagC/RRAGC or RagD/RRAGD GTP-bound, and Ragulator. Interaction with FNIP1 or FNIP2 mediates indirect interaction with the PRKAA1, PRKAB1 and PRKAG1 subunits of 5'-AMP-activated protein kinase (AMPK). Interacts with HSP90AA1 in the presence of FNIP1. Interacts with HSP70, STUB1, CDC37, AHSA1, CCT2, STIP1, PTGES3 and PPP5C. Interacts with GABARAP; interaction takes place in the presence of FNIP1 and/or FNIP2. Interacts with RILP; the interaction is direct and promotes association between RILP and RAB34. Interacts with KIF3A and KIF3B. Interacts with lactate dehydrogenase LDHA, but not LDHB; the interaction is direct, may preferentially bind LDHA dimers rather than tetramers, and regulates LDHA activity, acting as an uncompetitive inhibitor. Phosphorylation by ULK1 modulates the interaction with GABARAP and is required to regulate autophagy. As to expression, highly expressed in adult heart, pancreas, and prostate with moderate expression in adult brain, kidney, liver, adipose tissue and lung.

Its subcellular location is the lysosome membrane. The protein localises to the cytoplasm. It is found in the cytosol. It localises to the cell projection. The protein resides in the cilium. Its subcellular location is the cytoskeleton. The protein localises to the microtubule organizing center. It is found in the centrosome. It localises to the spindle. The protein resides in the nucleus. GTPase-activating activity is inhibited in the folliculin complex (LFC), which stabilizes the GDP-bound state of RagA/RRAGA (or RagB/RRAGB), because Arg-164 is located far from the RagC/RRAGC or RagD/RRAGD nucleotide pocket. Disassembly of the LFC complex upon amino acid restimulation liberates the GTPase-activating activity. Multi-functional protein, involved in both the cellular response to amino acid availability and in the regulation of glycolysis. GTPase-activating protein that plays a key role in the cellular response to amino acid availability through regulation of the non-canonical mTORC1 signaling cascade controlling the MiT/TFE factors TFEB and TFE3. Activates mTORC1 by acting as a GTPase-activating protein: specifically stimulates GTP hydrolysis by RagC/RRAGC or RagD/RRAGD, promoting the conversion to the GDP-bound state of RagC/RRAGC or RagD/RRAGD, and thereby activating the kinase activity of mTORC1. The GTPase-activating activity is inhibited during starvation and activated in presence of nutrients. Acts as a key component for non-canonical mTORC1-dependent control of the MiT/TFE factors TFEB and TFE3, while it is not involved in mTORC1-dependent phosphorylation of canonical RPS6KB1/S6K1 and EIF4EBP1/4E-BP1. In low-amino acid conditions, the lysosomal folliculin complex (LFC) is formed on the membrane of lysosomes, which inhibits the GTPase-activating activity of FLCN, inactivates mTORC1 and maximizes nuclear translocation of TFEB and TFE3. Upon amino acid restimulation, RagA/RRAGA (or RagB/RRAGB) nucleotide exchange promotes disassembly of the LFC complex and liberates the GTPase-activating activity of FLCN, leading to activation of mTORC1 and subsequent cytoplasmic retention of TFEB and TFE3. Indirectly acts as a positive regulator of Wnt signaling by promoting mTOR-dependent cytoplasmic retention of MiT/TFE factor TFE3. Required for the exit of hematopoietic stem cell from pluripotency by promoting mTOR-dependent cytoplasmic retention of TFE3, thereby increasing Wnt signaling. Involved in the control of embryonic stem cells differentiation; together with LAMTOR1 it is necessary to recruit and activate RagC/RRAGC and RagD/RRAGD at the lysosomes, and to induce exit of embryonic stem cells from pluripotency via non-canonical, mTOR-independent TFE3 inactivation. Acts as an inhibitor of browning of adipose tissue by regulating mTOR-dependent cytoplasmic retention of TFE3. In response to flow stress, regulates STK11/LKB1 accumulation and mTORC1 activation through primary cilia: may act by recruiting STK11/LKB1 to primary cilia for activation of AMPK resided at basal bodies, causing mTORC1 down-regulation. Together with FNIP1 and/or FNIP2, regulates autophagy: following phosphorylation by ULK1, interacts with GABARAP and promotes autophagy. Required for starvation-induced perinuclear clustering of lysosomes by promoting association of RILP with its effector RAB34. Regulates glycolysis by binding to lactate dehydrogenase LDHA, acting as an uncompetitive inhibitor. In Mus musculus (Mouse), this protein is Folliculin.